We begin with the raw amino-acid sequence, 161 residues long: Monooxygenase AgnL5 (161 aa).

The protein belongs to the avfA family.

It participates in secondary metabolite biosynthesis. In terms of biological role, monooxygenase; part of the gene cluster that mediates the biosynthesis of agnestins, dihydroxy-xanthone metabolites. The pathway begins with the assembly and cyclization of atrochrysone thioester by the non-reducing polyketide synthase Agnpks1. The atrochrysone carboxyl ACP thioesterase AgnL7 then breaks the thioester bond and releases the atrochrysone carboxylic acid as the first enzyme-free intermediate. The decarboxylase AgnL1 then catalyzes the concerted decarboxylation-elimination required to convert atochrysone carboxylic acid into emodin anthrone, which is further oxidized to emodin by the anthrone oxygenase AgnL2. Emodin then undergoes reduction catalyzed by the oxidoreductase AgnL4 to yield the dihydroquinone tautomer which is the substrate for reduction by the short chain dehydrogenase AgnL6 reduction to produce hydroxyketone, followed by AgnL8 dehydration and likely spontaneous autoxidation to chrysophanol. Baeyer-Villiger oxidation by the oxidase AgnL3 leads to monodictyphenone via cleavage of the C-10/C-10a bond of chrysophanol. Alternative cleavage at the C-4a/C-10 bond of chrysophanol also leads to the formation some cephalone F. Further conversion to agnestins A and B, requires reduction to dihydro-monodictyphenone, oxidation to agnestin C probably via an epoxide, and rearrangement to either agnestin A or agnestin B directly, although agnestin A or agnestin B can also interconvert. Within the cluster, AgnR1 is the only unassigned oxidoreductase present which could be involved in this conversion. However, AgnR1 seems not to be involved in this step, and thus genes involved in the proposed oxidation/reduction may be located elsewhere on the genome. Further agnestin A derivatives are probably formed by spontaneous decarboxylations, dehydrations and methanolysis reactions. The chain is Monooxygenase AgnL5 from Paecilomyces divaricatus (Penicillium divaricatum).